Consider the following 217-residue polypeptide: Ras-related protein Rab11B (217 aa).

Residue 21 to 28 (GDSGVGKS) coordinates GTP. The Effector region signature appears at 43 to 51 (SKSTIGVEF). Residues 69–73 (DTAGQ) and 127–130 (NKAD) each bind GTP. Residues cysteine 214 and cysteine 215 are each lipidated (S-geranylgeranyl cysteine).

It belongs to the small GTPase superfamily. Rab family.

The protein resides in the cell membrane. The protein is Ras-related protein Rab11B (RAB11B) of Nicotiana tabacum (Common tobacco).